The sequence spans 216 residues: Protein-L-isoaspartate O-methyltransferase 1 (216 aa).

S60 is a catalytic residue.

This sequence belongs to the methyltransferase superfamily. L-isoaspartyl/D-aspartyl protein methyltransferase family.

It localises to the cytoplasm. The enzyme catalyses [protein]-L-isoaspartate + S-adenosyl-L-methionine = [protein]-L-isoaspartate alpha-methyl ester + S-adenosyl-L-homocysteine. Its function is as follows. Catalyzes the methyl esterification of L-isoaspartyl residues in peptides and proteins that result from spontaneous decomposition of normal L-aspartyl and L-asparaginyl residues. It plays a role in the repair and/or degradation of damaged proteins. The polypeptide is Protein-L-isoaspartate O-methyltransferase 1 (pcm1) (Archaeoglobus fulgidus (strain ATCC 49558 / DSM 4304 / JCM 9628 / NBRC 100126 / VC-16)).